Consider the following 94-residue polypeptide: Neutrophil antibiotic peptide NP-2 (94 aa).

The N-terminal stretch at 1-19 is a signal peptide; it reads MRTLTLLTALLLLALHTQA. A propeptide spanning residues 20–62 is cleaved from the precursor; it reads KSPQGTAEEAPDQEQLVMEDQDISISFGGDKGTALQDADVKAG. 3 disulfides stabilise this stretch: Cys65–Cys93, Cys67–Cys82, and Cys72–Cys92.

This sequence belongs to the alpha-defensin family. Highest expression in bone marrow and to a much lesser extent in small intestine.

It is found in the secreted. Active in vitro against S.aureus, fungi, Gram-positive and Gram-negative bacteria and to a lesser extent against an enveloped virus. The sequence is that of Neutrophil antibiotic peptide NP-2 (Defa) from Rattus norvegicus (Rat).